We begin with the raw amino-acid sequence, 251 residues long: NADPH-dependent oxidoreductase (251 aa).

It belongs to the flavin oxidoreductase frp family. The cofactor is FMN.

Functionally, reduces FMN, organic nitro compounds and disulfide DTNB. Involved in maintenance of the cellular redox state and the disulfide stress response. The sequence is that of NADPH-dependent oxidoreductase (nfrA) from Staphylococcus aureus (strain Mu50 / ATCC 700699).